We begin with the raw amino-acid sequence, 403 residues long: MFPIECHTLQTSFKQVLSLVAEKITTKAFVIFSVLFSLIIGFIASCGFLFAGPPAFIASGLCFALLVSVVSFFGCQKLIPYGIQHLMSYVKSIPSLSSSLIDFLKTESKSISSLYPNPGLKECFKGASPKYKKFFFDHPEKLLSAAFTDWTPQIIPSDSGQPRTIILSHSSLPFSLTLSTLDFETLHTHLIKSNALTCRVGYAHQLPSGNPVMREAKEGVLQQHYDTGNETFFISIQESKQLQQEELFKKLFSHYAQITEHNLSNEILLLEPLKTPLHTPKARTLELLALFCALEQLRYTKVADWRTKKLAPIFPLDYEDFFTLFMKKQHYTLPGNVSNMRILSPVRPVSETALTTIIISGLEEEDKLGLLGQVQPFLFDAEEAHPQRGESILIQNVLDDITQ.

Helical transmembrane passes span 29–49 (FVIFSVLFSLIIGFIASCGFL) and 55–75 (AFIASGLCFALLVSVVSFFGC).

Belongs to the chlamydial CPn_0129/CT_036/TC_0306 family.

The protein localises to the cell membrane. This is an uncharacterized protein from Chlamydia trachomatis serovar D (strain ATCC VR-885 / DSM 19411 / UW-3/Cx).